Reading from the N-terminus, the 723-residue chain is Ribosome quality control complex subunit 1 (723 aa).

Residues 21 to 125 form a disordered region; it reads SNSNANKMTS…DKGSDDDDDD (105 aa). Over residues 27–37 the composition is skewed to polar residues; that stretch reads KMTSGKSTAGN. Positions 93 to 108 are enriched in basic residues; sequence SSRRKKNKKAKRKQKN. Residues 109–118 are compositionally biased toward basic and acidic residues; the sequence is HTAEAAKDKG. A Phosphoserine modification is found at Ser119. Thr158 is modified (phosphothreonine). The residue at position 160 (Ser160) is a Phosphoserine.

The protein belongs to the TCF25 family. As to quaternary structure, component of the ribosome quality control complex (RQC), composed of the E3 ubiquitin ligase RKR1/LTN1, RQC1 and RQC2, as well as CDC48 and its ubiquitin-binding cofactors. RQC forms a stable complex with 60S ribosomal subunits.

It localises to the cytoplasm. Component of the ribosome quality control complex (RQC), a ribosome-associated complex that mediates ubiquitination and extraction of incompletely synthesized nascent chains for proteasomal degradation. Within the RQC complex, RQC1 is essential for the recruitment of CDC48 to incompletely synthesized nascent polypeptides that are ubiquitinated by RKR1/LTN1. The sequence is that of Ribosome quality control complex subunit 1 from Saccharomyces cerevisiae (strain ATCC 204508 / S288c) (Baker's yeast).